A 53-amino-acid polypeptide reads, in one-letter code: Sec-independent protein translocase protein TatA (53 aa).

A helical transmembrane segment spans residues 1–21 (MGMSFSHLLIVLLIIFVLFGA).

This sequence belongs to the TatA/E family. The Tat system comprises two distinct complexes: a TatABC complex, containing multiple copies of TatA, TatB and TatC subunits, and a separate TatA complex, containing only TatA subunits. Substrates initially bind to the TatABC complex, which probably triggers association of the separate TatA complex to form the active translocon.

Its subcellular location is the cell inner membrane. Part of the twin-arginine translocation (Tat) system that transports large folded proteins containing a characteristic twin-arginine motif in their signal peptide across membranes. TatA could form the protein-conducting channel of the Tat system. In Rickettsia akari (strain Hartford), this protein is Sec-independent protein translocase protein TatA.